The sequence spans 361 residues: Phospho-N-acetylmuramoyl-pentapeptide-transferase (361 aa).

10 helical membrane-spanning segments follow: residues 28 to 48, 74 to 94, 99 to 119, 133 to 153, 168 to 188, 203 to 223, 236 to 256, 263 to 283, 288 to 308, and 338 to 358; these read LAII…IEFL, TMGG…LADL, IWIT…DDYA, SKLL…EYLD, LSLD…VGSS, VPIA…GNLI, TGEL…FLWF, VFMG…ISVI, IVLA…ILQV, and KVVI…LSSL.

It belongs to the glycosyltransferase 4 family. MraY subfamily. Mg(2+) is required as a cofactor.

It localises to the cell inner membrane. It catalyses the reaction UDP-N-acetyl-alpha-D-muramoyl-L-alanyl-gamma-D-glutamyl-meso-2,6-diaminopimeloyl-D-alanyl-D-alanine + di-trans,octa-cis-undecaprenyl phosphate = di-trans,octa-cis-undecaprenyl diphospho-N-acetyl-alpha-D-muramoyl-L-alanyl-D-glutamyl-meso-2,6-diaminopimeloyl-D-alanyl-D-alanine + UMP. Its pathway is cell wall biogenesis; peptidoglycan biosynthesis. Catalyzes the initial step of the lipid cycle reactions in the biosynthesis of the cell wall peptidoglycan: transfers peptidoglycan precursor phospho-MurNAc-pentapeptide from UDP-MurNAc-pentapeptide onto the lipid carrier undecaprenyl phosphate, yielding undecaprenyl-pyrophosphoryl-MurNAc-pentapeptide, known as lipid I. The protein is Phospho-N-acetylmuramoyl-pentapeptide-transferase of Rickettsia africae (strain ESF-5).